The primary structure comprises 109 residues: Glutaredoxin-8 (109 aa).

The region spanning 5–109 is the Glutaredoxin domain; the sequence is VTKAEEMIKS…EELTKIGLLP (105 aa). Cys-25 and Cys-28 are joined by a disulfide.

It belongs to the glutaredoxin family. As to quaternary structure, monomer.

Its subcellular location is the cytoplasm. Glutathione-dependent oxidoreductase with lower activity compared to the other members of the glutaredoxin family. The disulfide bond functions as an electron carrier in the glutathione-dependent synthesis of deoxyribonucleotides by the enzyme ribonucleotide reductase. This Saccharomyces cerevisiae (strain ATCC 204508 / S288c) (Baker's yeast) protein is Glutaredoxin-8 (GRX8).